The sequence spans 171 residues: Protein GrpE (171 aa).

Residues 1 to 22 form a disordered region; that stretch reads MNHEQPDIESQQSAADAAATAG.

It belongs to the GrpE family. Homodimer.

It localises to the cytoplasm. Its function is as follows. Participates actively in the response to hyperosmotic and heat shock by preventing the aggregation of stress-denatured proteins, in association with DnaK and GrpE. It is the nucleotide exchange factor for DnaK and may function as a thermosensor. Unfolded proteins bind initially to DnaJ; upon interaction with the DnaJ-bound protein, DnaK hydrolyzes its bound ATP, resulting in the formation of a stable complex. GrpE releases ADP from DnaK; ATP binding to DnaK triggers the release of the substrate protein, thus completing the reaction cycle. Several rounds of ATP-dependent interactions between DnaJ, DnaK and GrpE are required for fully efficient folding. This Stenotrophomonas maltophilia (strain K279a) protein is Protein GrpE.